A 204-amino-acid polypeptide reads, in one-letter code: Translation initiation factor 2 subunit beta (204 aa).

The region spanning 146–204 is the TRAM domain; that stretch reads AIEEGKELEVHIESISKKGDGVARIGKYILYVAGTKAGQNVKVRITRISGQVAFTQKIL.

It belongs to the eIF-2-beta/eIF-5 family. As to quaternary structure, heterotrimer composed of an alpha, a beta and a gamma chain.

EIF-2 functions in the early steps of protein synthesis by forming a ternary complex with GTP and initiator tRNA. This Methanocorpusculum labreanum (strain ATCC 43576 / DSM 4855 / Z) protein is Translation initiation factor 2 subunit beta.